A 216-amino-acid chain; its full sequence is Protein Syd (216 aa).

Belongs to the Syd family.

Its subcellular location is the cell inner membrane. Functionally, interacts with the SecY protein in vivo. May bind preferentially to an uncomplexed state of SecY, thus functioning either as a chelating agent for excess SecY in the cell or as a regulatory factor that negatively controls the translocase function. This chain is Protein Syd, found in Shewanella sp. (strain ANA-3).